We begin with the raw amino-acid sequence, 737 residues long: MENETHYAEAVIDNGTFGTRTIRFETGRLAKQAAGSAVAYLDDDTMVLSATTASKRPKDNLDFFPLTVDVEERQYAAGKIPGSFFRREGRPSEDAILTCRLIDRPLRPSFKKGLRNEIQIVETIMALNPDHLYDVVAINAASCSTILAGLPFSGPIGATRVALIKGQWVAFPTHTELEDAVFDMVVAGRVLEDGDVAIMMVEAEATEKTIQLVKDGAEAPTEEIVAAGLDAAKPFIKALCKAQSDLASKAAKPVGEFPVFLDYQDDVFEALAKAVTSELKQALTIAGKQDREAELDRVKEIAAEKLLPAFEGREKEISAAYRSLTKQLVRERVIKDKVRIDGRGVTDIRTLAAEVEAIPRVHGSALFERGETQILGVTTLNMLRMEQQLDTLSPVTRKRYMHNYNFPPYSVGETGRVGSPKRREIGHGALAERAIVPVLPTREEFPYAIRQVSEALGSNGSTSMGSVCASTMSLLNAGVPLKAAVAGIAMGLISQEIDGKTHYVALTDILGAEDAFGDMDFKVAGTKQFVTALQLDTKLDGIPASVLAAALKQARDARLHILDVMNEAIDVPDEMSPNAPRIITVKIPVDKIGEVIGPKGKMINQIQEDTGADITIEDDGTIYIGAQAGSQAEAARATINAIANPTMPEVGERYLGTVVKTTTFGAFVSLMPGKDGLLHISQIRKLAGGKRVENVEDVLGVGAKVQVEIAEIDSRGKLSLIPVIEGEEDEKKDDTDK.

Mg(2+)-binding residues include D514 and D520. The KH domain maps to 580-639 (PRIITVKIPVDKIGEVIGPKGKMINQIQEDTGADITIEDDGTIYIGAQAGSQAEAARATI). Residues 651–723 (GERYLGTVVK…SRGKLSLIPV (73 aa)) form the S1 motif domain.

Belongs to the polyribonucleotide nucleotidyltransferase family. It depends on Mg(2+) as a cofactor.

The protein resides in the cytoplasm. It carries out the reaction RNA(n+1) + phosphate = RNA(n) + a ribonucleoside 5'-diphosphate. Its function is as follows. Involved in mRNA degradation. Catalyzes the phosphorolysis of single-stranded polyribonucleotides processively in the 3'- to 5'-direction. This chain is Polyribonucleotide nucleotidyltransferase, found in Streptomyces griseus subsp. griseus (strain JCM 4626 / CBS 651.72 / NBRC 13350 / KCC S-0626 / ISP 5235).